We begin with the raw amino-acid sequence, 247 residues long: Probable transcriptional regulatory protein Gbem_3313 (247 aa).

It belongs to the TACO1 family.

Its subcellular location is the cytoplasm. The protein is Probable transcriptional regulatory protein Gbem_3313 of Citrifermentans bemidjiense (strain ATCC BAA-1014 / DSM 16622 / JCM 12645 / Bem) (Geobacter bemidjiensis).